The sequence spans 86 residues: Large ribosomal subunit protein bL31 (86 aa).

The interval 65-86 is disordered; the sequence is YGMGSANSATSKEQKEEKDSNK. The span at 76–86 shows a compositional bias: basic and acidic residues; that stretch reads KEQKEEKDSNK.

The protein belongs to the bacterial ribosomal protein bL31 family. Type A subfamily. As to quaternary structure, part of the 50S ribosomal subunit.

Functionally, binds the 23S rRNA. This Prochlorococcus marinus (strain MIT 9312) protein is Large ribosomal subunit protein bL31.